A 282-amino-acid polypeptide reads, in one-letter code: B3 domain-containing protein At5g06250 (282 aa).

The segment at residues 46–159 (FEKSLTPSDV…RLFIGWRRRG (114 aa)) is a DNA-binding region (TF-B3).

It is found in the nucleus. In Arabidopsis thaliana (Mouse-ear cress), this protein is B3 domain-containing protein At5g06250.